The chain runs to 269 residues: Interleukin-1 beta (269 aa).

A propeptide spanning residues 1-116 (MAEVPELASE…TRNNDACVHD (116 aa)) is cleaved from the precursor.

It belongs to the IL-1 family. Monomer. In its precursor form, weakly interacts with full-length MEFV; the mature cytokine does not interact at all. Interacts with integrins ITGAV:ITGBV and ITGA5:ITGB1; integrin-binding is required for IL1B signaling. Interacts with cargo receptor TMED10; the interaction is direct and is required for the secretion of IL1B mature form. Interacts with HSP90AB1; the interaction facilitates cargo translocation into the ERGIC. Interacts with HSP90B1; the interaction facilitates cargo translocation into the ERGIC.

It is found in the cytoplasm. The protein localises to the cytosol. The protein resides in the secreted. Its subcellular location is the lysosome. It localises to the extracellular exosome. Its function is as follows. Potent pro-inflammatory cytokine. Initially discovered as the major endogenous pyrogen, induces prostaglandin synthesis, neutrophil influx and activation, T-cell activation and cytokine production, B-cell activation and antibody production, and fibroblast proliferation and collagen production. Promotes Th17 differentiation of T-cells. Synergizes with IL12/interleukin-12 to induce IFNG synthesis from T-helper 1 (Th1) cells. Plays a role in angiogenesis by inducing VEGF production synergistically with TNF and IL6. Involved in transduction of inflammation downstream of pyroptosis: its mature form is specifically released in the extracellular milieu by passing through the gasdermin-D (GSDMD) pore. In Macaca mulatta (Rhesus macaque), this protein is Interleukin-1 beta (IL1B).